We begin with the raw amino-acid sequence, 485 residues long: MALLVETTTSGREYKVKDMSQADFGRLEIELAEVEMPGLMSCRTEFGPSQPFKGARITGSLHMTIQTAVLIETLTALGAEVRWCSCNIFSTQDHAAAAIARDSAAVFAWKGETLQEYWWCSERALDWGPGGGPDLIVDDGGDVTLLIHEGVKAEEVFEKTGQLPDPSSTDNAEMQIVLTIIRDGLKTDPKRYQKMKTRIVGVSEETTTGVKRLYQMQASGTLLFPAINVNDSVTKSKFDNLYGCRHSLPDGLMRATDVMIAGKVAVVCGYGDVGKGCAAALKQGGARVIVTEIDPICALQALMEGLQVLTLEDVISEADIFVTTTGNKDIIMVSDMKKMKNNAIVCNIGHFDNEIDMHGLETYPGVKRITIKPQTDRWVFPETKSGIIVLAEGRLMNLGCATGHPSFVMSCSFTNQVIAQIELWKEKTSGKYEKKVYVLPKHLDEKVAALHLGQLGAKLTKLSKDQADYISVPVEGPYKPAHYRY.

Threonine 64, aspartate 139, and glutamate 205 together coordinate substrate. 206–208 contacts NAD(+); it reads TTT. Residues lysine 235 and aspartate 239 each coordinate substrate. NAD(+)-binding positions include asparagine 240, 269-274, glutamate 292, asparagine 327, 348-350, and asparagine 397; these read GYGDVG and IGH.

It belongs to the adenosylhomocysteinase family. NAD(+) serves as cofactor.

It carries out the reaction S-adenosyl-L-homocysteine + H2O = L-homocysteine + adenosine. It functions in the pathway amino-acid biosynthesis; L-homocysteine biosynthesis; L-homocysteine from S-adenosyl-L-homocysteine: step 1/1. Its function is as follows. Adenosylhomocysteine is a competitive inhibitor of S-adenosyl-L-methionine-dependent methyl transferase reactions; therefore adenosylhomocysteinase may play a key role in the control of methylations via regulation of the intracellular concentration of adenosylhomocysteine. This Medicago sativa (Alfalfa) protein is Adenosylhomocysteinase (SAHH).